A 4328-amino-acid polypeptide reads, in one-letter code: Cadherin-4 (4328 aa).

The N-terminal stretch at 1-23 (MKKHRVFHLFLLIFCKAISLVTT) is a signal peptide. Topologically, residues 24–4072 (SSSTEQIFEF…TVLEFLLKAE (4049 aa)) are extracellular. Asparagine 39 and asparagine 56 each carry an N-linked (GlcNAc...) asparagine glycan. Cadherin domains follow at residues 108-153 (PLNR…SPVF) and 156-275 (GEQG…NPNI). N-linked (GlcNAc...) asparagine glycosylation is found at asparagine 196, asparagine 330, asparagine 339, asparagine 365, asparagine 431, asparagine 452, and asparagine 584. Cadherin domains lie at 384-492 (DNEK…APVF), 507-608 (PGDV…SPVF), 609-720 (SSFP…SPQF), 721-826 (DEVS…PPKC), 827-934 (VVQH…AIEF), 935-1051 (DDVA…KPMY), 1047-1156 (KKPM…SPTF), 1175-1262 (RIFA…PPEI), 1265-1363 (KKSD…RPKF), 1364-1467 (SASH…SPYF), and 1476-1570 (VDES…APET). 2 N-linked (GlcNAc...) asparagine glycosylation sites follow: asparagine 811 and asparagine 899. The Cell attachment site motif lies at 1090 to 1092 (RGD). N-linked (GlcNAc...) asparagine glycosylation occurs at asparagine 1192. A disordered region spans residues 1246–1267 (NSAGQKPRKSKNSPPEISGKKS). N-linked (GlcNAc...) asparagine glycosylation is present at asparagine 1335. N-linked (GlcNAc...) asparagine glycosylation is present at asparagine 1610. One can recognise a Cadherin 14 domain in the interval 1671 to 1784 (RRQVYRGTIR…IDENDEPPRF (114 aa)). An N-linked (GlcNAc...) asparagine glycan is attached at asparagine 1895. One can recognise a Cadherin 15 domain in the interval 1917-1984 (FSIVNPHEAF…ENINDETPIF (68 aa)). 7 N-linked (GlcNAc...) asparagine glycosylation sites follow: asparagine 2059, asparagine 2150, asparagine 2216, asparagine 2367, asparagine 2413, asparagine 2440, and asparagine 2535. Cadherin domains are found at residues 2187 to 2285 (EKLK…MPEF) and 2286 to 2397 (IRSD…PPRF). Cadherin domains are found at residues 2429-2505 (LQFS…PPFF), 2506-2608 (VLPF…VPRF), 2609-2712 (SNSH…APAF), 2719-2813 (FTIS…PPQF), 2828-2915 (SPIL…CPEA), 2913-3011 (PEAN…RPKI), 3012-3113 (IEKL…APTF), 3114-3216 (EKST…APKF), and 3217-3326 (EKEK…APTF). N-linked (GlcNAc...) asparagine glycosylation is found at asparagine 2844, asparagine 2916, asparagine 2941, asparagine 3083, and asparagine 3143. Asparagine 3330 carries an N-linked (GlcNAc...) asparagine glycan. Cadherin domains follow at residues 3335–3428 (VQEG…APTM) and 3429–3554 (KPMK…VDEF). N-linked (GlcNAc...) asparagine glycosylation occurs at asparagine 3512. The EGF-like 1 domain occupies 3706-3744 (ETNQCAKSPCEQWQLCIPSVHNSTYECVCPLGMEGDKCS). 10 cysteine pairs are disulfide-bonded: cysteine 3710-cysteine 3721, cysteine 3715-cysteine 3732, cysteine 3734-cysteine 3743, cysteine 3898-cysteine 3925, cysteine 3933-cysteine 3944, cysteine 3938-cysteine 3954, cysteine 3956-cysteine 3965, cysteine 3972-cysteine 3983, cysteine 3977-cysteine 3992, and cysteine 3994-cysteine 4003. N-linked (GlcNAc...) asparagine glycosylation is present at asparagine 3727. A Laminin G-like domain is found at 3757 to 3925 (EAELSVGGDG…MKLFGAQPGC (169 aa)). 2 EGF-like domains span residues 3929 to 3966 (TSSPCNDLPCQHAGTCISQGKSHFKCECPSRYSGNVCE) and 3968 to 4004 (DLEPCASSPCPTGIQCIPFYNDYLCKCPNGFTGKHCE). Asparagine 4043 carries N-linked (GlcNAc...) asparagine glycosylation. The chain crosses the membrane as a helical span at residues 4073-4093 (IVIVILGVLLLLLVFCLTFIT). Residues 4094–4328 (WKCCKKNRDP…IDEEVNIHIS (235 aa)) are Cytoplasmic-facing. 2 disordered regions span residues 4143–4215 (TSSV…SSLR) and 4268–4311 (NFER…PISL). Residues 4178–4196 (TRRDPLPSDKFRRVDETAN) show a composition bias toward basic and acidic residues. A Cell attachment site motif is present at residues 4207–4209 (RGD).

As to expression, in larvae and adult, it is expressed in various tissues including pharyngeal muscle, hypodermis and gonad. In the nervous system it is expressed in sensory neurons and motor neurons in the ventral cord.

It is found in the cell membrane. In terms of biological role, potential calcium-dependent cell-adhesion protein that controls axon guidance in the ventral cord. The chain is Cadherin-4 from Caenorhabditis elegans.